A 264-amino-acid chain; its full sequence is S-adenosylmethionine decarboxylase proenzyme (264 aa).

S113 functions as the Schiff-base intermediate with substrate; via pyruvic acid in the catalytic mechanism. Residue S113 is modified to Pyruvic acid (Ser); by autocatalysis. H118 serves as the catalytic Proton acceptor; for processing activity. C141 functions as the Proton donor; for catalytic activity in the catalytic mechanism.

The protein belongs to the prokaryotic AdoMetDC family. Type 2 subfamily. Heterooctamer of four alpha and four beta chains arranged as a tetramer of alpha/beta heterodimers. Pyruvate serves as cofactor. Post-translationally, is synthesized initially as an inactive proenzyme. Formation of the active enzyme involves a self-maturation process in which the active site pyruvoyl group is generated from an internal serine residue via an autocatalytic post-translational modification. Two non-identical subunits are generated from the proenzyme in this reaction, and the pyruvate is formed at the N-terminus of the alpha chain, which is derived from the carboxyl end of the proenzyme. The post-translation cleavage follows an unusual pathway, termed non-hydrolytic serinolysis, in which the side chain hydroxyl group of the serine supplies its oxygen atom to form the C-terminus of the beta chain, while the remainder of the serine residue undergoes an oxidative deamination to produce ammonia and the pyruvoyl group blocking the N-terminus of the alpha chain.

It carries out the reaction S-adenosyl-L-methionine + H(+) = S-adenosyl 3-(methylsulfanyl)propylamine + CO2. Its pathway is amine and polyamine biosynthesis; S-adenosylmethioninamine biosynthesis; S-adenosylmethioninamine from S-adenosyl-L-methionine: step 1/1. Catalyzes the decarboxylation of S-adenosylmethionine to S-adenosylmethioninamine (dcAdoMet), the propylamine donor required for the synthesis of the polyamines spermine and spermidine from the diamine putrescine. The chain is S-adenosylmethionine decarboxylase proenzyme from Xanthomonas oryzae pv. oryzae (strain MAFF 311018).